The chain runs to 104 residues: Co-chaperonin GroES 2 (104 aa).

This sequence belongs to the GroES chaperonin family. In terms of assembly, heptamer of 7 subunits arranged in a ring. Interacts with the chaperonin GroEL.

It is found in the cytoplasm. Functionally, together with the chaperonin GroEL, plays an essential role in assisting protein folding. The GroEL-GroES system forms a nano-cage that allows encapsulation of the non-native substrate proteins and provides a physical environment optimized to promote and accelerate protein folding. GroES binds to the apical surface of the GroEL ring, thereby capping the opening of the GroEL channel. The protein is Co-chaperonin GroES 2 of Mesorhizobium japonicum (strain LMG 29417 / CECT 9101 / MAFF 303099) (Mesorhizobium loti (strain MAFF 303099)).